A 543-amino-acid polypeptide reads, in one-letter code: Sodium-dependent lysophosphatidylcholine symporter 1 (543 aa).

Positions 1–14 (MAKGEGAESGSAAG) are enriched in low complexity. The tract at residues 1–34 (MAKGEGAESGSAAGLLPTSILQSTERPAQVKKEP) is disordered. Over 1–40 (MAKGEGAESGSAAGLLPTSILQSTERPAQVKKEPKKKKQQ) the chain is Cytoplasmic. A helical transmembrane segment spans residues 41–70 (LSVCNKLCYALGGAPYQVTGCALGFFLQIY). The Extracellular portion of the chain corresponds to 71–94 (LLDVAQKDEEVVFCFSSFQVGPFS). The chain crosses the membrane as a helical span at residues 95-115 (ASIILFVGRAWDAITDPLVGL). The Cytoplasmic portion of the chain corresponds to 116–127 (CISKSPWTCLGR). A helical membrane pass occupies residues 128 to 147 (LMPWIIFSTPLAVIAYFLIW). Over 148–157 (FVPDFPHGQT) the chain is Extracellular. Residues 158 to 182 (YWYLLFYCLFETMVTCFHVPYSALT) form a helical membrane-spanning segment. Residues 183–189 (MFISTEQ) lie on the Cytoplasmic side of the membrane. A helical transmembrane segment spans residues 190–221 (TERDSATAYRMTVEVLGTVLGTAIQGQIVGQA). Over 222-241 (DTPCFQDLNSSTVASQSANH) the chain is Extracellular. Cysteine 225 and cysteine 473 form a disulfide bridge. N-linked (GlcNAc...) asparagine glycans are attached at residues asparagine 230 and asparagine 240. A helical transmembrane segment spans residues 242-275 (THGTTSHRETQKAYLLAAGVIVCIYIICAVILIL). The Cytoplasmic portion of the chain corresponds to 276–306 (GVREQREPYEAQQSEPIAYFRGLRLVMSHGP). The helical transmembrane segment at 307 to 333 (YIKLITGFLFTSLAFMLVEGNFVLFCT) threads the bilayer. Topologically, residues 334 to 344 (YTLGFRNEFQN) are extracellular. Residues 345-363 (LLLAIMLSATLTIPIWQWF) traverse the membrane as a helical segment. Residues 364–367 (LTRF) are Cytoplasmic-facing. A helical membrane pass occupies residues 368 to 389 (GKKTAVYVGISSAVPFLILVAL). The Extracellular segment spans residues 390–392 (MES). Residues 393 to 429 (NLIITYAVAVAAGISVAAAFLLPWSMLPDVIDDFHLK) form a helical membrane-spanning segment. The Cytoplasmic portion of the chain corresponds to 430–439 (QPHFHGTEPI). Residues 440–466 (FFSFYVFFTKFASGVSLGISTLSLDFA) form a helical membrane-spanning segment. At 467–478 (GYQTRGCSQPER) the chain is on the extracellular side. A helical membrane pass occupies residues 479-502 (VKFTLNMLVTMAPIVLILLGLLLF). Residues 503-543 (KMYPIDEERRRQNKKALQALRDEASSSGCSETDSTELASIL) are Cytoplasmic-facing.

Belongs to the major facilitator superfamily. Interacts with ERVFRD-1/syncytin-2. As to expression, in placenta, associated with trophoblast cells.

It is found in the cell membrane. It localises to the endoplasmic reticulum membrane. It catalyses the reaction a 1-acyl-sn-glycero-3-phosphocholine(in) + Na(+)(in) = a 1-acyl-sn-glycero-3-phosphocholine(out) + Na(+)(out). It carries out the reaction 1-(4Z,7Z,10Z,13Z,16Z,19Z-docosahexaenoyl)-sn-glycero-3-phosphocholine(in) + Na(+)(in) = 1-(4Z,7Z,10Z,13Z,16Z,19Z-docosahexaenoyl)-sn-glycero-3-phosphocholine(out) + Na(+)(out). The enzyme catalyses 1-(9Z-octadecenoyl)-sn-glycero-3-phosphocholine(in) + Na(+)(in) = 1-(9Z-octadecenoyl)-sn-glycero-3-phosphocholine(out) + Na(+)(out). The catalysed reaction is 1-hexadecanoyl-sn-glycero-3-phosphocholine(in) + Na(+)(in) = 1-hexadecanoyl-sn-glycero-3-phosphocholine(out) + Na(+)(out). It catalyses the reaction a 1-acyl-sn-glycero-3-phosphoethanolamine(in) + Na(+)(in) = a 1-acyl-sn-glycero-3-phosphoethanolamine(out) + Na(+)(out). In terms of biological role, sodium-dependent lysophosphatidylcholine (LPC) symporter, which plays an essential role for blood-brain barrier formation and function. Specifically expressed in endothelium of the blood-brain barrier of micro-vessels and transports LPC into the brain. Transport of LPC is essential because it constitutes the major mechanism by which docosahexaenoic acid (DHA), an omega-3 fatty acid that is essential for normal brain growth and cognitive function, enters the brain. Transports LPC carrying long-chain fatty acids such LPC oleate and LPC palmitate with a minimum acyl chain length of 14 carbons. Does not transport docosahexaenoic acid in unesterified fatty acid. Specifically required for blood-brain barrier formation and function, probably by mediating lipid transport. Not required for central nervous system vascular morphogenesis. Acts as a transporter for tunicamycin, an inhibitor of asparagine-linked glycosylation. In placenta, acts as a receptor for ERVFRD-1/syncytin-2 and is required for trophoblast fusion. The chain is Sodium-dependent lysophosphatidylcholine symporter 1 from Homo sapiens (Human).